A 184-amino-acid polypeptide reads, in one-letter code: Deoxyuridine 5'-triphosphate nucleotidohydrolase (184 aa).

Residues 1–16 (MPHTQTDAHQNNQENF) show a composition bias toward polar residues. The disordered stretch occupies residues 1-25 (MPHTQTDAHQNNQENFSSSLISSRP). Residues 96 to 98 (RSG), Asn109, 113 to 115 (TID), and Lys123 contribute to the substrate site. The interval 165 to 184 (STKNTVGNRGAGGFGSTGHD) is disordered. Residues 173–184 (RGAGGFGSTGHD) are compositionally biased toward gly residues.

The protein belongs to the dUTPase family. The cofactor is Mg(2+).

It carries out the reaction dUTP + H2O = dUMP + diphosphate + H(+). Its pathway is pyrimidine metabolism; dUMP biosynthesis; dUMP from dCTP (dUTP route): step 2/2. Its function is as follows. This enzyme is involved in nucleotide metabolism: it produces dUMP, the immediate precursor of thymidine nucleotides and it decreases the intracellular concentration of dUTP so that uracil cannot be incorporated into DNA. The protein is Deoxyuridine 5'-triphosphate nucleotidohydrolase of Bartonella henselae (strain ATCC 49882 / DSM 28221 / CCUG 30454 / Houston 1) (Rochalimaea henselae).